The sequence spans 1009 residues: Putative receptor-like protein 8 (1009 aa).

Residues 1–22 (MKTNFVILLLLLCVFAISPSQQ) form the signal peptide. Residues 23–961 (EEINQHNPGI…EEDDEAPVDM (939 aa)) lie on the Extracellular side of the membrane. Asn-159 and Asn-197 each carry an N-linked (GlcNAc...) asparagine glycan. The LRR 1; degenerate repeat unit spans residues 204–231 (FEEVRSLELSAGLNGFVDNVEGYKSLRK). 25 LRR repeats span residues 232-255 (LKNLEILDLSYNNRFNNNILPFIN), 257-281 (ATSLTSLSLQNNSMEGPFPFEEIKD), 282-305 (LTNLKLLDLSRNILKGPMQGLTHL), 306-329 (KKLKALDLSNNVFSSIMELQVVCE), 331-354 (KNLWELDLRENKFVGQLPLCLGRL), 355-377 (NKLRVLDLSSNQLNGNLPSTFNR), 379-402 (ESLEYLSLLDNNFTGFFSFDPLAN), 404-427 (TKLKVFKLSSTSDMLQIKTESEPK), 442-465 (LEKIPSFLLQDNLFTIFQMPATIV), 466-490 (HELQFLDFSVNDISGLLPDNIGYAL), 492-514 (NLLRMNGSRNGFQGHLPSSMGEM), 515-538 (VNITSLDLSYNNFSGKLPRRFVTG), 540-565 (FSLKHLKLSHNNFSGHFLPRETSFTS), 567-587 (EELRVDSNSFTGKIGVGLLSS), 588-612 (NTTLSVLDMSNNFLTGDIPSWMSNL), 613-636 (SGLTILSISNNFLEGTIPPSLLAI), 638-660 (FLSLIDLSGNLLSGSLPSRVGGE), 662-681 (GIKLFLHDNMLTGPIPDTLL), 682-705 (EKVQILDLRYNQLSGSIPQFVNTE), 707-728 (IYILLMKGNNLTGSMSRQLCDL), 729-752 (RNIRLLDLSDNKLNGFIPSCLYNL), 819-842 (LDYMYGMDLSSNELSGVIPAELGS), 843-866 (LSKLRVMNLSCNFLSSSIPSSFSN), 867-891 (LKDIESLDLSHNMLQGSIPQQLTNL), and 893-916 (SLVVFDVSYNNLSGIIPQGRQFNT). N-linked (GlcNAc...) asparagine glycosylation is present at Asn-267. N-linked (GlcNAc...) asparagine glycans are attached at residues Asn-390 and Asn-402. N-linked (GlcNAc...) asparagine glycosylation is found at Asn-497, Asn-516, Asn-526, and Asn-551. N-linked (GlcNAc...) asparagine glycans are attached at residues Asn-588 and Asn-611. N-linked (GlcNAc...) asparagine glycosylation is found at Asn-716 and Asn-751. 4 N-linked (GlcNAc...) asparagine glycosylation sites follow: Asn-850, Asn-890, Asn-903, and Asn-934. A disordered region spans residues 934-955 (NRSCDAKKTSDESENGGEEEDD). Acidic residues predominate over residues 945–955 (ESENGGEEEDD). Residues 962–982 (LAFYFSSASTYVTTLIGIFIL) form a helical membrane-spanning segment. Over 983–1009 (MCFDCPLRRAWLRIVDASIASVKSMLP) the chain is Cytoplasmic.

It belongs to the RLP family.

It is found in the cell membrane. This Arabidopsis thaliana (Mouse-ear cress) protein is Putative receptor-like protein 8.